The chain runs to 138 residues: Sec-independent protein translocase protein TatB (138 aa).

The helical transmembrane segment at 1 to 21 (MFDIGFSELLLIAVVALVVLG) threads the bilayer. A disordered region spans residues 116–138 (VHHVHVPPPSTSTHGNNGQEKSQ). Over residues 126 to 138 (TSTHGNNGQEKSQ) the composition is skewed to polar residues.

The protein belongs to the TatB family. In terms of assembly, the Tat system comprises two distinct complexes: a TatABC complex, containing multiple copies of TatA, TatB and TatC subunits, and a separate TatA complex, containing only TatA subunits. Substrates initially bind to the TatABC complex, which probably triggers association of the separate TatA complex to form the active translocon.

The protein localises to the cell inner membrane. In terms of biological role, part of the twin-arginine translocation (Tat) system that transports large folded proteins containing a characteristic twin-arginine motif in their signal peptide across membranes. Together with TatC, TatB is part of a receptor directly interacting with Tat signal peptides. TatB may form an oligomeric binding site that transiently accommodates folded Tat precursor proteins before their translocation. The sequence is that of Sec-independent protein translocase protein TatB from Xylella fastidiosa (strain Temecula1 / ATCC 700964).